Reading from the N-terminus, the 158-residue chain is 2-C-methyl-D-erythritol 2,4-cyclodiphosphate synthase (158 aa).

Residues aspartate 9 and histidine 11 each coordinate a divalent metal cation. Residues 9 to 11 (DVH) and 35 to 36 (HS) contribute to the 4-CDP-2-C-methyl-D-erythritol 2-phosphate site. Histidine 43 is a binding site for a divalent metal cation. Residues 57 to 59 (DIG), 62 to 66 (FPDTD), 133 to 136 (TTTE), phenylalanine 140, and arginine 143 contribute to the 4-CDP-2-C-methyl-D-erythritol 2-phosphate site.

This sequence belongs to the IspF family. Homotrimer. A divalent metal cation is required as a cofactor.

The catalysed reaction is 4-CDP-2-C-methyl-D-erythritol 2-phosphate = 2-C-methyl-D-erythritol 2,4-cyclic diphosphate + CMP. The protein operates within isoprenoid biosynthesis; isopentenyl diphosphate biosynthesis via DXP pathway; isopentenyl diphosphate from 1-deoxy-D-xylulose 5-phosphate: step 4/6. Its function is as follows. Involved in the biosynthesis of isopentenyl diphosphate (IPP) and dimethylallyl diphosphate (DMAPP), two major building blocks of isoprenoid compounds. Catalyzes the conversion of 4-diphosphocytidyl-2-C-methyl-D-erythritol 2-phosphate (CDP-ME2P) to 2-C-methyl-D-erythritol 2,4-cyclodiphosphate (ME-CPP) with a corresponding release of cytidine 5-monophosphate (CMP). This Haemophilus influenzae (strain PittGG) protein is 2-C-methyl-D-erythritol 2,4-cyclodiphosphate synthase.